Here is a 503-residue protein sequence, read N- to C-terminus: UDP-N-acetylmuramoylalanine--D-glutamate ligase (503 aa).

ATP is bound at residue 129–135 (GTNGKTT).

The protein belongs to the MurCDEF family.

It localises to the cytoplasm. The enzyme catalyses UDP-N-acetyl-alpha-D-muramoyl-L-alanine + D-glutamate + ATP = UDP-N-acetyl-alpha-D-muramoyl-L-alanyl-D-glutamate + ADP + phosphate + H(+). The protein operates within cell wall biogenesis; peptidoglycan biosynthesis. Its function is as follows. Cell wall formation. Catalyzes the addition of glutamate to the nucleotide precursor UDP-N-acetylmuramoyl-L-alanine (UMA). In Burkholderia vietnamiensis (strain G4 / LMG 22486) (Burkholderia cepacia (strain R1808)), this protein is UDP-N-acetylmuramoylalanine--D-glutamate ligase.